Reading from the N-terminus, the 698-residue chain is Elongation factor G (698 aa).

One can recognise a tr-type G domain in the interval 10–285 (AATRNIGIMA…AVVDFLPSPT (276 aa)). Residues 19-26 (AHIDAGKT), 83-87 (DTPGH), and 137-140 (NKMD) contribute to the GTP site.

This sequence belongs to the TRAFAC class translation factor GTPase superfamily. Classic translation factor GTPase family. EF-G/EF-2 subfamily.

It is found in the cytoplasm. Functionally, catalyzes the GTP-dependent ribosomal translocation step during translation elongation. During this step, the ribosome changes from the pre-translocational (PRE) to the post-translocational (POST) state as the newly formed A-site-bound peptidyl-tRNA and P-site-bound deacylated tRNA move to the P and E sites, respectively. Catalyzes the coordinated movement of the two tRNA molecules, the mRNA and conformational changes in the ribosome. This chain is Elongation factor G, found in Parafrankia sp. (strain EAN1pec).